The following is a 313-amino-acid chain: Foldase protein PrsA (313 aa).

A signal peptide spans 1 to 20 (MKKKLLAGAITLLSVATLAA). A lipid anchor (N-palmitoyl cysteine) is attached at Cys21. A lipid anchor (S-diacylglycerol cysteine) is attached at Cys21. The PpiC domain maps to 143-241 (TPDVTAQIIR…SQYYIVKLTK (99 aa)).

This sequence belongs to the PrsA family.

Its subcellular location is the cell membrane. The catalysed reaction is [protein]-peptidylproline (omega=180) = [protein]-peptidylproline (omega=0). Its function is as follows. Plays a major role in protein secretion by helping the post-translocational extracellular folding of several secreted proteins. The polypeptide is Foldase protein PrsA (Streptococcus pneumoniae (strain ATCC BAA-255 / R6)).